Here is a 119-residue protein sequence, read N- to C-terminus: MAIITVTAQANEKNTRTVSTAKGDKKIISVPLFEKEKGSNVKVAYGSAFLPDFIQLGDTVTVSGRVQAKESGEYVNYNFVFPTVEKVFITNDNSSQSQAKQDLFGGSEPIEVNSEDLPF.

A disordered region spans residues 96–119; the sequence is QSQAKQDLFGGSEPIEVNSEDLPF.

Belongs to the skunalikevirus SSB protein family. Homodimer; two homodimers can further weakly assemble into a homotetramer.

Binds ssDNA with nanomolar affinity but no sequence specificity. This is SSB protein from Lactococcus phage p2 (Lactococcus lactis bacteriophage p2).